The chain runs to 396 residues: MIFVFANIFKVPTVSPSVMAISVRLASTEATFQTKPFKLHKLDSGPDINVHVTKEDAVHYYTQMLTIRRMESAAGNLYKEKKVRGFCHLYSGQEACAVGTKAAMDAGDAAVTAYRCHGWTYLSGSSVAKVLCELTGRITGNVYGKGGSMHMYGENFYGGNGIVGAQQPLGTGIAFAMKYRKEKNVCITMFGDGATNQGQLFESMNMAKLWDLPVLYVCENNGYGMGTAAARSSASTDYYTRGDYVPGIWVDGMDVLAVRQAVRWAKEWCNAGKGPLMIEMATYRYSGHSMSDPGTSYRTREEVQEVRKTRDPITGFKDKIVTAGLVTEDEIKEIDKQVRKEIDAAVKQAHTDKESPVELMLTDIYYNTPAQYVRCTTDEVLQKYLTSEEAVKALAK.

The N-terminal 25 residues, 1-25 (MIFVFANIFKVPTVSPSVMAISVRL), are a transit peptide targeting the mitochondrion. Positions 88, 114, 115, 153, 161, 163, 192, 193, 194, 221, and 223 each coordinate pyruvate. Thiamine diphosphate is bound by residues Y114 and R115. Positions 161, 163, 192, 193, 194, and 221 each coordinate thiamine diphosphate. D192 provides a ligand contact to Mg(2+). The Mg(2+) site is built by N221 and Y223. Position 288 (H288) interacts with thiamine diphosphate. A phosphoserine mark is found at S289 and S296.

As to quaternary structure, heterotetramer of two PDHA1 and two PDHB subunits. The heterotetramer interacts with DLAT, and is part of the multimeric pyruvate dehydrogenase complex that contains multiple copies of pyruvate dehydrogenase (E1), dihydrolipoamide acetyltransferase (DLAT, E2) and lipoamide dehydrogenase (DLD, E3). Requires thiamine diphosphate as cofactor. The cofactor is Mg(2+).

The protein resides in the mitochondrion matrix. It carries out the reaction N(6)-[(R)-lipoyl]-L-lysyl-[protein] + pyruvate + H(+) = N(6)-[(R)-S(8)-acetyldihydrolipoyl]-L-lysyl-[protein] + CO2. Pyruvate dehydrogenase activity is inhibited by phosphorylation of PDHA1; it is reactivated by dephosphorylation. Functionally, the pyruvate dehydrogenase complex catalyzes the overall conversion of pyruvate to acetyl-CoA and CO(2), and thereby links the glycolytic pathway to the tricarboxylic cycle. This Ascaris suum (Pig roundworm) protein is Pyruvate dehydrogenase E1 component subunit alpha type I, mitochondrial.